The following is a 216-amino-acid chain: LexA repressor (216 aa).

The segment at residues 29-49 (RAEIAQALGFRSPNAAEDHLK) is a DNA-binding region (H-T-H motif). Residues serine 134 and lysine 171 each act as for autocatalytic cleavage activity in the active site.

This sequence belongs to the peptidase S24 family. Homodimer.

It carries out the reaction Hydrolysis of Ala-|-Gly bond in repressor LexA.. Represses a number of genes involved in the response to DNA damage (SOS response), including recA and lexA. In the presence of single-stranded DNA, RecA interacts with LexA causing an autocatalytic cleavage which disrupts the DNA-binding part of LexA, leading to derepression of the SOS regulon and eventually DNA repair. The polypeptide is LexA repressor (Bordetella parapertussis (strain 12822 / ATCC BAA-587 / NCTC 13253)).